A 384-amino-acid chain; its full sequence is Guanine nucleotide-binding protein alpha-1 subunit (384 aa).

The interval 1–22 is disordered; the sequence is MGSLCSRNKHYSQADDEENTQT. Gly-2 is lipidated: N-myristoyl glycine. A lipid anchor (S-palmitoyl cysteine) is attached at Cys-5. The G-alpha domain maps to 38 to 384; the sequence is HIQKLLLLGA…RRNLFEAGLL (347 aa). The segment at 41–54 is G1 motif; that stretch reads KLLLLGAGDSGKST. Asp-49, Ser-50, Gly-51, Lys-52, Ser-53, Thr-54, Asp-163, Leu-188, Thr-194, Gly-222, Asn-288, Lys-289, Asp-291, and Ala-356 together coordinate GTP. Residue Ser-53 coordinates Mg(2+). The G2 motif stretch occupies residues 186–194; it reads DVLFARIRT. Mg(2+) is bound at residue Thr-194. Positions 215–224 are G3 motif; sequence YRLFDVGGQR. Residues 284–291 form a G4 motif region; sequence MLFLNKFD. The G5 motif stretch occupies residues 354 to 359; the sequence is TTALDQ.

It belongs to the G-alpha family. In terms of assembly, g proteins are composed of 3 units; alpha, beta and gamma. The alpha chain contains the guanine nucleotide binding site. Mg(2+) is required as a cofactor.

Functionally, guanine nucleotide-binding proteins (G proteins) are involved as modulators or transducers in various transmembrane signaling systems. The chain is Guanine nucleotide-binding protein alpha-1 subunit (GPA1) from Solanum tuberosum (Potato).